The chain runs to 71 residues: Protein Tlp homolog (71 aa).

The segment at 30-56 (ETLQNNSLSRDQRQAIMEKNKRREESI) is disordered. Over residues 39 to 56 (RDQRQAIMEKNKRREESI) the composition is skewed to basic and acidic residues.

This sequence belongs to the Tlp family.

The sequence is that of Protein Tlp homolog from Desulforamulus reducens (strain ATCC BAA-1160 / DSM 100696 / MI-1) (Desulfotomaculum reducens).